The sequence spans 271 residues: Urease accessory protein UreD (271 aa).

Belongs to the UreD family. As to quaternary structure, ureD, UreF and UreG form a complex that acts as a GTP-hydrolysis-dependent molecular chaperone, activating the urease apoprotein by helping to assemble the nickel containing metallocenter of UreC. The UreE protein probably delivers the nickel.

Its subcellular location is the cytoplasm. Functionally, required for maturation of urease via the functional incorporation of the urease nickel metallocenter. The sequence is that of Urease accessory protein UreD from Haemophilus influenzae (strain PittEE).